We begin with the raw amino-acid sequence, 88 residues long: Large ribosomal subunit protein bL27 (88 aa).

A disordered region spans residues 1-22 (MAHKKGASSSRNGRDSNAQRLG). The segment covering 7–19 (ASSSRNGRDSNAQ) has biased composition (polar residues).

Belongs to the bacterial ribosomal protein bL27 family.

The chain is Large ribosomal subunit protein bL27 from Mycolicibacterium gilvum (strain PYR-GCK) (Mycobacterium gilvum (strain PYR-GCK)).